We begin with the raw amino-acid sequence, 379 residues long: Epoxyqueuosine reductase (379 aa).

Catalysis depends on Asp-139, which acts as the Proton donor. Residues 181–213 (IPLPVDQPVEEGCGKCVACMTICPTGAIVEPYT) enclose the 4Fe-4S ferredoxin-type domain. 8 residues coordinate [4Fe-4S] cluster: Cys-193, Cys-196, Cys-199, Cys-203, Cys-219, Cys-246, Cys-249, and Cys-253.

It belongs to the QueG family. As to quaternary structure, monomer. Requires cob(II)alamin as cofactor. [4Fe-4S] cluster serves as cofactor.

Its subcellular location is the cytoplasm. It carries out the reaction epoxyqueuosine(34) in tRNA + AH2 = queuosine(34) in tRNA + A + H2O. It participates in tRNA modification; tRNA-queuosine biosynthesis. Its function is as follows. Catalyzes the conversion of epoxyqueuosine (oQ) to queuosine (Q), which is a hypermodified base found in the wobble positions of tRNA(Asp), tRNA(Asn), tRNA(His) and tRNA(Tyr). The sequence is that of Epoxyqueuosine reductase from Escherichia coli (strain K12).